We begin with the raw amino-acid sequence, 268 residues long: Small ribosomal subunit protein eS1 (268 aa).

Residues 1-21 (MAVGKNKGLSKGGKKGGKKKV) form a disordered region.

The protein belongs to the eukaryotic ribosomal protein eS1 family. In terms of assembly, component of the small ribosomal subunit. Mature ribosomes consist of a small (40S) and a large (60S) subunit. The 40S subunit contains about 33 different proteins and 1 molecule of RNA (18S). The 60S subunit contains about 49 different proteins and 3 molecules of RNA (28S, 5.8S and 5S).

It is found in the cytoplasm. In terms of biological role, essential for oogenesis; required for late follicle cell development. This Drosophila mojavensis (Fruit fly) protein is Small ribosomal subunit protein eS1.